The chain runs to 309 residues: Metaxin-3 (309 aa).

The tract at residues 274–309 is disordered; sequence MDDNLRRSPQNRPQKLSTLKPVGGAENSHSSDLLSH. Composition is skewed to polar residues over residues 280–290 and 300–309; these read RSPQNRPQKLS and NSHSSDLLSH.

It belongs to the metaxin family. In terms of assembly, part of a large protein complex spanning both mitochondrial membranes termed the mitochondrial intermembrane space bridging (MIB) complex.

It is found in the mitochondrion. The protein localises to the mitochondrion outer membrane. Its function is as follows. Could function in transport of proteins into the mitochondrion. This Xenopus laevis (African clawed frog) protein is Metaxin-3 (mtx3).